The primary structure comprises 277 residues: Isoprenyl transferase 1 (277 aa).

Residues methionine 1 to glycine 30 form a disordered region. Aspartate 42 is an active-site residue. Aspartate 42 serves as a coordination point for Mg(2+). Residues glycine 43–arginine 46, tryptophan 47, arginine 55, histidine 59, and serine 87–glutamate 89 contribute to the substrate site. The active-site Proton acceptor is asparagine 90. Substrate contacts are provided by residues tryptophan 91, arginine 93, arginine 210, and arginine 216–serine 218. Glutamate 229 contacts Mg(2+).

The protein belongs to the UPP synthase family. In terms of assembly, homodimer. The cofactor is Mg(2+).

Functionally, catalyzes the condensation of isopentenyl diphosphate (IPP) with allylic pyrophosphates generating different type of terpenoids. The protein is Isoprenyl transferase 1 of Streptomyces coelicolor (strain ATCC BAA-471 / A3(2) / M145).